Consider the following 640-residue polypeptide: 1-deoxy-D-xylulose-5-phosphate synthase (640 aa).

Thiamine diphosphate is bound by residues His79 and 120 to 122 (GHS). Asp151 is a Mg(2+) binding site. Thiamine diphosphate contacts are provided by residues 152–153 (GG), Asn180, Tyr288, and Glu372. Asn180 is a binding site for Mg(2+).

The protein belongs to the transketolase family. DXPS subfamily. Homodimer. It depends on Mg(2+) as a cofactor. Thiamine diphosphate serves as cofactor.

It catalyses the reaction D-glyceraldehyde 3-phosphate + pyruvate + H(+) = 1-deoxy-D-xylulose 5-phosphate + CO2. Its pathway is metabolic intermediate biosynthesis; 1-deoxy-D-xylulose 5-phosphate biosynthesis; 1-deoxy-D-xylulose 5-phosphate from D-glyceraldehyde 3-phosphate and pyruvate: step 1/1. Catalyzes the acyloin condensation reaction between C atoms 2 and 3 of pyruvate and glyceraldehyde 3-phosphate to yield 1-deoxy-D-xylulose-5-phosphate (DXP). This is 1-deoxy-D-xylulose-5-phosphate synthase from Nitrosococcus oceani (strain ATCC 19707 / BCRC 17464 / JCM 30415 / NCIMB 11848 / C-107).